We begin with the raw amino-acid sequence, 572 residues long: DNA polymerase (572 aa).

Positions 1-222 (MPRKMYSCDF…LGLDKEVRYA (222 aa)) are 3'-5' exonuclease and strand displacement activities. Residues 56 to 66 (YFHNLKFDGAF) are interaction with the primer terminal protein. Mg(2+)-binding residues include Asp142 and Asp166. The segment at 223-226 (YRGG) is DNA-binding; Involved in the formation of a stable complex between TP and phi29 DNA polymerase. The tract at residues 227–572 (FTWLNDRFKE…VLVDDTFTIK (346 aa)) is initiation, polymerization and pyrophosphorolytic activities. Residues Asp246 and Val247 each coordinate Mg(2+). 5-methyl-UTP is bound by residues Tyr251, Lys368, and Lys380. Mg(2+)-binding residues include Asp453 and Asp455. Residue Asp455 participates in 5-methyl-UTP binding.

This sequence belongs to the DNA polymerase type-B family. In terms of assembly, interacts with the primer terminal protein; this interaction allows the initiation of TP-primed DNA replication at both viral DNA ends. Interacts with DNA. It depends on Mg(2+) as a cofactor.

It carries out the reaction DNA(n) + a 2'-deoxyribonucleoside 5'-triphosphate = DNA(n+1) + diphosphate. Its function is as follows. Polymerase responsible for protein-primed viral DNA replication by strand displacement with high processivity and fidelity. To start replication, the DNA polymerase forms a heterodimer with a free primer terminal protein (TP), recognizes the replication origins at both 5' ends of the linear chromosome, and initiates replication using as primer the OH-group of Ser-232 of the TP. This polymerase possesses three enzymatic activities: DNA synthesis (polymerase), primer terminal protein (TP) deoxynucleotidylation, which is the formation of a covalent linkage (phosphoester) between the hydroxyl group of a specific serine residue in TP and 5'-dAMP, a reaction directed by the second T at the 3' end, and 3' to 5' exonuclease activity. Exonuclease activity has a proofreading purpose. The protein is DNA polymerase (2) of Bacillus subtilis (Bacteriophage PZA).